The sequence spans 79 residues: Small ribosomal subunit protein bS18 (79 aa).

This sequence belongs to the bacterial ribosomal protein bS18 family. Part of the 30S ribosomal subunit. Forms a tight heterodimer with protein bS6.

Binds as a heterodimer with protein bS6 to the central domain of the 16S rRNA, where it helps stabilize the platform of the 30S subunit. The polypeptide is Small ribosomal subunit protein bS18 (Nitrobacter hamburgensis (strain DSM 10229 / NCIMB 13809 / X14)).